The primary structure comprises 225 residues: Uridylate kinase (225 aa).

9–10 is an ATP binding site; sequence GS. Gly44 serves as a coordination point for UMP. The ATP site is built by Gly45 and Arg49. Residues Asp66 and 114-120 contribute to the UMP site; that span reads THPGHTT. Residues Thr140, Asn141, Tyr146, and Asp149 each coordinate ATP.

The protein belongs to the UMP kinase family. As to quaternary structure, homohexamer.

The protein localises to the cytoplasm. The catalysed reaction is UMP + ATP = UDP + ADP. The protein operates within pyrimidine metabolism; CTP biosynthesis via de novo pathway; UDP from UMP (UMPK route): step 1/1. Inhibited by UTP. Catalyzes the reversible phosphorylation of UMP to UDP. This Thermococcus sibiricus (strain DSM 12597 / MM 739) protein is Uridylate kinase.